Here is a 3146-residue protein sequence, read N- to C-terminus: Bassianolide nonribosomal cyclodepsipeptide synthetase (3146 aa).

Over residues 1-12 (MEPPNNANTGQL) the composition is skewed to polar residues. The segment at 1-23 (MEPPNNANTGQLGPTLPNGTVDL) is disordered. A condensation 1 region spans residues 69–454 (HVVYEIPEDV…INKLQSTDGS (386 aa)). An adenylation 1 region spans residues 495 to 887 (GDTPNKPAVC…GRMDSQVKIR (393 aa)). The Carrier 1 domain maps to 1015 to 1091 (PDASAGVTKL…SLQAAIGGSS (77 aa)). At Ser-1052 the chain carries O-(pantetheine 4'-phosphoryl)serine. A condensation 2 region spans residues 1109–1538 (SYSQGRLWFL…QTLISVVPLT (430 aa)). Positions 1567–1973 (FRTQVASYPD…GRMDFQFKIR (407 aa)) are adenylation 2. Positions 2041–2181 (TYTELDTVSS…FPTRDYLERV (141 aa)) are S-adenosyl-L-methionine-dependent N-methyltransferase (MT). Carrier domains follow at residues 2514 to 2588 (FPLS…RQQL) and 2614 to 2688 (APTT…EVSQ). 2 positions are modified to O-(pantetheine 4'-phosphoryl)serine: Ser-2548 and Ser-2648. Residues 2734–3138 (QDVYLATHLQ…THLMEQVCNT (405 aa)) are condensation 3.

The protein belongs to the NRP synthetase family.

The catalysed reaction is 4 (R)-2-hydroxy-3-methylbutanoate + 4 L-leucine + 4 S-adenosyl-L-methionine + 8 ATP = bassianolide + 8 AMP + 4 S-adenosyl-L-homocysteine + 8 diphosphate + 8 H(+). Bassianolide nonribosomal synthetase that mediates the biosynthesis of bassianolide (BSL), a non-ribosomal cyclodepsipeptide that shows insecticidal and cancer cell antiproliferative activity. BSLS first catalyzes the iterative synthesis of an enzyme-bound dipeptidol monomer intermediate from D-2-hydroxyisovalerate and L-leucine before performing the condensation and cyclization of 4 dipeptidol monomers to yield the cyclic tetrameric ester bassianolide. The N-methyltransferase MT domain is responsible for the methylation of the leucine residues of bassianolide. BSLS is flexible with both the amino acid and hydroxyl acid precursors, and produces bassianolide as the major product (containing N-methyl-L-Leu), together with small amounts of beauvericin and its analogs beauvericins A-C (containing N-methyl-L-Phe). The sequence is that of Bassianolide nonribosomal cyclodepsipeptide synthetase from Beauveria bassiana (White muscardine disease fungus).